The following is a 129-amino-acid chain: Small ribosomal subunit protein uS9 (129 aa).

The span at threonine 104–lysine 113 shows a compositional bias: basic and acidic residues. The tract at residues threonine 104 to arginine 129 is disordered. Basic residues predominate over residues lysine 114–arginine 129.

This sequence belongs to the universal ribosomal protein uS9 family.

The sequence is that of Small ribosomal subunit protein uS9 from Sulfurimonas denitrificans (strain ATCC 33889 / DSM 1251) (Thiomicrospira denitrificans (strain ATCC 33889 / DSM 1251)).